The primary structure comprises 180 residues: Large ribosomal subunit protein uL6 (180 aa).

The protein belongs to the universal ribosomal protein uL6 family. In terms of assembly, part of the 50S ribosomal subunit.

In terms of biological role, this protein binds to the 23S rRNA, and is important in its secondary structure. It is located near the subunit interface in the base of the L7/L12 stalk, and near the tRNA binding site of the peptidyltransferase center. This Clostridium botulinum (strain Alaska E43 / Type E3) protein is Large ribosomal subunit protein uL6.